We begin with the raw amino-acid sequence, 1063 residues long: Unconventional myosin-Ic (1063 aa).

M1 is modified (N-acetylmethionine). The Myosin motor domain maps to 47–731; that stretch reads GVQDFVLLEN…TLFATEDALE (685 aa). ATP contacts are provided by residues N88, Y96, 139 to 148, and 192 to 196; these read SGESGAGKTE and NDNSS. K383 bears the N6-methyllysine mark. The residue at position 408 (S408) is a Phosphoserine. K486 is subject to N6-acetyllysine. Phosphoserine is present on S536. Residues 608 to 630 form an actin-binding region; that stretch reads LLELVEILKSKEPAYVRCIKPND. IQ domains follow at residues 734-757 and 758-786; these read RQSL…FLRV and KRSA…AAQT. Residues S864 and S1041 each carry the phosphoserine modification. The region spanning 885 to 1059 is the TH1 domain; it reads KDNYPQSVPR…NGHLAVVAPR (175 aa).

Belongs to the TRAFAC class myosin-kinesin ATPase superfamily. Myosin family. As to quaternary structure, interacts (via its IQ motifs) with CABP1 and CIB1; the interaction with CABP1 and CIB1 is calcium-dependent. Interacts (via tail domain) with PLEKHB1 (via PH domain); the interaction is not affected by the presence or absence of calcium and CALM. Interacts with POLR1A. Interacts with POLR2A. Component of the B-WICH complex, at least composed of SMARCA5/SNF2H, BAZ1B/WSTF, SF3B1, DEK, MYO1C, ERCC6, MYBBP1A and DDX21. Interacts (via its IQ motifs) with CALM; this precludes interaction with YWHAB. Interacts with YWHAB; this precludes interaction with CALM. Interacts with RPS6. Interacts with actin. Interacts with LLPH. Interacts with GLUT4. Interacts (via its IQ motifs) with SH3BGRL3; the interaction is dependent on calcium and takes place at membrane ruffles. Isoform 2 contains a N-acetylmethionine at position 1. In terms of tissue distribution, widely expressed.

It localises to the cytoplasm. The protein resides in the nucleus. It is found in the cell cortex. The protein localises to the cell projection. Its subcellular location is the ruffle membrane. It localises to the cytoplasmic vesicle. The protein resides in the stereocilium membrane. It is found in the nucleolus. The protein localises to the nucleoplasm. In terms of biological role, myosins are actin-based motor molecules with ATPase activity. Unconventional myosins serve in intracellular movements. Their highly divergent tails are presumed to bind to membranous compartments, which would be moved relative to actin filaments. Involved in glucose transporter recycling in response to insulin by regulating movement of intracellular GLUT4-containing vesicles to the plasma membrane. Component of the hair cell's (the sensory cells of the inner ear) adaptation-motor complex. Acts as a mediator of adaptation of mechanoelectrical transduction in stereocilia of vestibular hair cells. Binds phosphoinositides and links the actin cytoskeleton to cellular membranes. Its function is as follows. Isoform 3 is involved in regulation of transcription. Associated with transcriptional active ribosomal genes. Appears to cooperate with the WICH chromatin-remodeling complex to facilitate transcription. Necessary for the formation of the first phosphodiester bond during transcription initiation. This is Unconventional myosin-Ic (MYO1C) from Bos taurus (Bovine).